A 511-amino-acid polypeptide reads, in one-letter code: Histidine ammonia-lyase 2 (511 aa).

Positions 144–146 (SSG) form a cross-link, 5-imidazolinone (Ser-Gly). 2,3-didehydroalanine (Ser) is present on Ser145.

This sequence belongs to the PAL/histidase family. Post-translationally, contains an active site 4-methylidene-imidazol-5-one (MIO), which is formed autocatalytically by cyclization and dehydration of residues Ser-Ser-Gly.

It is found in the cytoplasm. The enzyme catalyses L-histidine = trans-urocanate + NH4(+). It functions in the pathway amino-acid degradation; L-histidine degradation into L-glutamate; N-formimidoyl-L-glutamate from L-histidine: step 1/3. The sequence is that of Histidine ammonia-lyase 2 (hutH2) from Fusobacterium nucleatum subsp. nucleatum (strain ATCC 25586 / DSM 15643 / BCRC 10681 / CIP 101130 / JCM 8532 / KCTC 2640 / LMG 13131 / VPI 4355).